A 352-amino-acid polypeptide reads, in one-letter code: NAD-dependent protein deacetylase sirtuin-2 (352 aa).

Ser-16 carries the post-translational modification Phosphoserine. Positions 20–301 (RLLDELTLEG…LALAELLGWK (282 aa)) constitute a Deacetylase sirtuin-type domain. NAD(+) is bound by residues 48–52 (AGIST) and 58–60 (DFR). Ser-63 carries the phosphoserine modification. An NAD(+)-binding site is contributed by 130-133 (QNID). The active-site Proton acceptor is the His-150. Zn(2+)-binding residues include Cys-158 and Cys-163. Ser-170 bears the Phosphoserine mark. Zn(2+) contacts are provided by Cys-184 and Cys-187. Residues 225–226 (TS), 249–251 (NKE), and Cys-287 each bind NAD(+). Positions 314–352 (SIDAQSGAGVPNPSTSASPKKSPPPAKDEARTTEREKPQ) are disordered. Low complexity predominate over residues 324-333 (PNPSTSASPK). Phosphoserine occurs at positions 331 and 335. The span at 339–352 (AKDEARTTEREKPQ) shows a compositional bias: basic and acidic residues.

Belongs to the sirtuin family. Class I subfamily. As to quaternary structure, interacts with CDC20, FOXO3 and FZR1. Associates with microtubules in primary cortical mature neurons. Homotrimer. Interacts (via both phosphorylated, unphosphorylated, active or inactive forms) with HDAC6; the interaction is necessary for the complex to interact with alpha-tubulin, suggesting that these proteins belong to a large complex that deacetylates the cytoskeleton. Interacts with FOXO1; the interaction is disrupted upon serum-starvation or oxidative stress, leading to increased level of acetylated FOXO1 and induction of autophagy. Interacts with RELA; the interaction occurs in the cytoplasm and is increased in a TNF-alpha-dependent manner. Interacts with HOXA10; the interaction is direct. Interacts with YWHAB and YWHAG; the interactions occur in a AKT-dependent manner and increase SIRT2-dependent TP53 deacetylation. Interacts with MAPK1/ERK2 and MAPK3/ERK1; the interactions increase SIRT2 stability and deacetylation activity. Interacts (phosphorylated form) with KMT5A isoform 2; the interaction is direct, stimulates KMT5A-mediated methyltransferase activity on histone at 'Lys-20' (H4K20me1) and is increased in a H(2)O(2)-induced oxidative stress-dependent manner. Interacts with G6PD; the interaction is enhanced by H(2)O(2) treatment. Interacts with a G1/S-specific cyclin E-CDK2 complex. Interacts with AURKA, CDK5R1 (p35 form) and CDK5 and HIF1A. Interacts with the tRNA ligase SARS1; recruited to the VEGFA promoter via interaction with SARS1. Interacts with BEX4; negatively regulates alpha-tubulin deacetylation by SIRT2. Interacts with MORN3; the interaction enhances the ubiquitination of p53/TP53. Requires Zn(2+) as cofactor. In terms of processing, phosphorylated at phosphoserine and phosphothreonine. Phosphorylated at Ser-331 by a mitotic kinase CDK1/cyclin B at the G2/M transition; phosphorylation regulates the delay in cell-cycle progression. Phosphorylated at Ser-331 by a mitotic kinase G1/S-specific cyclin E/Cdk2 complex; phosphorylation inactivates SIRT2-mediated alpha-tubulin deacetylation and thereby negatively regulates cell adhesion, cell migration and neurite outgrowth during neuronal differentiation. Phosphorylated by cyclin A/Cdk2 and p35-Cdk5 complexes and to a lesser extent by the cyclin D3/Cdk4 and cyclin B/Cdk1, in vitro. Dephosphorylated at Ser-331 by CDC14A and CDC14B around early anaphase. Acetylated by EP300; acetylation leads both to the decreased of SIRT2-mediated alpha-tubulin deacetylase activity and SIRT2-mediated down-regulation of TP53 transcriptional activity. Post-translationally, ubiquitinated.

It localises to the nucleus. Its subcellular location is the cytoplasm. The protein localises to the perinuclear region. It is found in the cytoskeleton. The protein resides in the microtubule organizing center. It localises to the centrosome. Its subcellular location is the centriole. The protein localises to the spindle. It is found in the midbody. The protein resides in the chromosome. It localises to the perikaryon. Its subcellular location is the cell projection. The protein localises to the growth cone. It is found in the myelin membrane. It catalyses the reaction N(6)-acetyl-L-lysyl-[protein] + NAD(+) + H2O = 2''-O-acetyl-ADP-D-ribose + nicotinamide + L-lysyl-[protein]. The catalysed reaction is N(6)-tetradecanoyl-L-lysyl-[protein] + NAD(+) + H2O = 2''-O-tetradecanoyl-ADP-D-ribose + nicotinamide + L-lysyl-[protein]. The enzyme catalyses N(6)-hexadecanoyl-L-lysyl-[protein] + NAD(+) + H2O = 2''-O-hexadecanoyl-ADP-D-ribose + nicotinamide + L-lysyl-[protein]. Its activity is regulated as follows. Inhibited by Sirtinol, A3 and M15 small molecules. Inhibited by nicotinamide. Inhibited by a macrocyclic peptide inhibitor S2iL5. Inhibited by EP300-induced acetylation. Functionally, NAD-dependent protein deacetylase, which deacetylates internal lysines on histone and alpha-tubulin as well as many other proteins such as key transcription factors. Participates in the modulation of multiple and diverse biological processes such as cell cycle control, genomic integrity, microtubule dynamics, cell differentiation, metabolic networks, and autophagy. Plays a major role in the control of cell cycle progression and genomic stability. Functions in the antephase checkpoint preventing precocious mitotic entry in response to microtubule stress agents, and hence allowing proper inheritance of chromosomes. Positively regulates the anaphase promoting complex/cyclosome (APC/C) ubiquitin ligase complex activity by deacetylating CDC20 and FZR1, then allowing progression through mitosis. Associates both with chromatin at transcriptional start sites (TSSs) and enhancers of active genes. Plays a role in cell cycle and chromatin compaction through epigenetic modulation of the regulation of histone H4 'Lys-20' methylation (H4K20me1) during early mitosis. Specifically deacetylates histone H4 at 'Lys-16' (H4K16ac) between the G2/M transition and metaphase enabling H4K20me1 deposition by KMT5A leading to ulterior levels of H4K20me2 and H4K20me3 deposition throughout cell cycle, and mitotic S-phase progression. Deacetylates KMT5A modulating KMT5A chromatin localization during the mitotic stress response. Also deacetylates histone H3 at 'Lys-57' (H3K56ac) during the mitotic G2/M transition. During oocyte meiosis progression, may deacetylate histone H4 at 'Lys-16' (H4K16ac) and alpha-tubulin, regulating spindle assembly and chromosome alignment by influencing microtubule dynamics and kinetochore function. Deacetylates histone H4 at 'Lys-16' (H4K16ac) at the VEGFA promoter and thereby contributes to regulate expression of VEGFA, a key regulator of angiogenesis. Deacetylates alpha-tubulin at 'Lys-40' and hence controls neuronal motility, oligodendroglial cell arbor projection processes and proliferation of non-neuronal cells. Phosphorylation at Ser-368 by a G1/S-specific cyclin E-CDK2 complex inactivates SIRT2-mediated alpha-tubulin deacetylation, negatively regulating cell adhesion, cell migration and neurite outgrowth during neuronal differentiation. Deacetylates PARD3 and participates in the regulation of Schwann cell peripheral myelination formation during early postnatal development and during postinjury remyelination. Involved in several cellular metabolic pathways. Plays a role in the regulation of blood glucose homeostasis by deacetylating and stabilizing phosphoenolpyruvate carboxykinase PCK1 activity in response to low nutrient availability. Acts as a key regulator in the pentose phosphate pathway (PPP) by deacetylating and activating the glucose-6-phosphate G6PD enzyme, and therefore, stimulates the production of cytosolic NADPH to counteract oxidative damage. Maintains energy homeostasis in response to nutrient deprivation as well as energy expenditure by inhibiting adipogenesis and promoting lipolysis. Attenuates adipocyte differentiation by deacetylating and promoting FOXO1 interaction to PPARG and subsequent repression of PPARG-dependent transcriptional activity. Plays a role in the regulation of lysosome-mediated degradation of protein aggregates by autophagy in neuronal cells. Deacetylates FOXO1 in response to oxidative stress or serum deprivation, thereby negatively regulating FOXO1-mediated autophagy. Deacetylates a broad range of transcription factors and co-regulators regulating target gene expression. Deacetylates transcriptional factor FOXO3 stimulating the ubiquitin ligase SCF(SKP2)-mediated FOXO3 ubiquitination and degradation. Deacetylates HIF1A and therefore promotes HIF1A degradation and inhibition of HIF1A transcriptional activity in tumor cells in response to hypoxia. Deacetylates RELA in the cytoplasm inhibiting NF-kappaB-dependent transcription activation upon TNF-alpha stimulation. Inhibits transcriptional activation by deacetylating p53/TP53 and EP300. Also deacetylates EIF5A. Functions as a negative regulator on oxidative stress-tolerance in response to anoxia-reoxygenation conditions. Plays a role as tumor suppressor. In addition to protein deacetylase activity, also has activity toward long-chain fatty acyl groups and mediates protein-lysine demyristoylation and depalmitoylation of target proteins, such as ARF6 and KRAS, thereby regulating their association with membranes. In Pongo abelii (Sumatran orangutan), this protein is NAD-dependent protein deacetylase sirtuin-2 (SIRT2).